Here is a 224-residue protein sequence, read N- to C-terminus: GTP-binding protein RHO3 (224 aa).

Position 22–29 (22–29) interacts with GTP; the sequence is GDGACGKT. The short motif at 44–52 is the Effector region element; the sequence is YEPTVFENY. GTP contacts are provided by residues 69–73 and 127–130; these read DTAGQ and LKCD. A disordered region spans residues 205-224; sequence TPKGARDSAPEAESSSCTIM. Cysteine 221 carries the post-translational modification Cysteine methyl ester. A lipid anchor (S-geranylgeranyl cysteine) is attached at cysteine 221. A propeptide spans 222–224 (removed in mature form); that stretch reads TIM.

The protein belongs to the small GTPase superfamily. Rho family.

It is found in the cell membrane. In terms of biological role, involved in the regulation of actin polarization. Rho proteins are required for distinct steps during polarized hyphal growth of A.gossypii. The polypeptide is GTP-binding protein RHO3 (RHO3) (Eremothecium gossypii (strain ATCC 10895 / CBS 109.51 / FGSC 9923 / NRRL Y-1056) (Yeast)).